The sequence spans 112 residues: Large ribosomal subunit protein uL24 (112 aa).

Belongs to the universal ribosomal protein uL24 family. As to quaternary structure, part of the 50S ribosomal subunit.

Functionally, one of two assembly initiator proteins, it binds directly to the 5'-end of the 23S rRNA, where it nucleates assembly of the 50S subunit. Its function is as follows. One of the proteins that surrounds the polypeptide exit tunnel on the outside of the subunit. In Desulfitobacterium hafniense (strain Y51), this protein is Large ribosomal subunit protein uL24.